Consider the following 334-residue polypeptide: Putative heat shock protein HSP 90-alpha A5 (334 aa).

A disordered region spans residues 55–107 (KRNKQVSDAEAEKKEDKRKKKKESNDKPEIEDVGSDEEEEKKDADKKKKKSKE). The segment covering 59 to 69 (QVSDAEAEKKE) has biased composition (basic and acidic residues). Positions 85–94 (EDVGSDEEEE) are enriched in acidic residues. Serine 89 carries the phosphoserine modification. Positions 234 to 267 (LELPEDEEEKKKQEEKKTKFENLCKIMKDMLEKK) form a coiled coil. The segment at 314-334 (EMPPLRGGDDTSRMEEVGGSG) is disordered. A compositionally biased stretch (basic and acidic residues) spans 320–334 (GGDDTSRMEEVGGSG). The short motif at 327 to 331 (MEEVG) is the TPR repeat-binding element.

The protein belongs to the heat shock protein 90 family. In terms of assembly, homodimer.

It is found in the cytoplasm. Putative molecular chaperone that may promote the maturation, structural maintenance and proper regulation of specific target proteins. This is Putative heat shock protein HSP 90-alpha A5 (HSP90AA5P) from Homo sapiens (Human).